A 243-amino-acid chain; its full sequence is Voltage-gated monoatomic cation channel TMEM109 (243 aa).

Residues 1-33 (MAGAHSNPSWSRHLFKAVLMVLGALLLVHSASA) form the signal peptide. Topologically, residues 34–83 (QTHREFASPGQQKRESSADILTEIGRSLKETLDTWLGPETMHVISETLLQ) are lumenal. A helical membrane pass occupies residues 84-104 (VMWAISSAISVACFALSGIAA). Residues 105–135 (QLLSALGLDGEQLTQVLKLSPSQVQTLLLWG) are Cytoplasmic-facing. The chain crosses the membrane as a helical span at residues 136 to 156 (AAALVIYWLLSLLLGLVLALL). The Lumenal segment spans residues 157-185 (GRILGGLKLVLFVAGFVGLVRSVPDPSTR). The helical transmembrane segment at 186-205 (ALLLLALLTVFALLSRLTGS) threads the bilayer. Over 206-243 (RSSGTHLEAKVRGLERQIEELRGRQRRAAKIPRSMEEE) the chain is Cytoplasmic.

In terms of assembly, homooligomer. Interacts with CRYAB; in the cellular response to DNA damage.

It localises to the nucleus outer membrane. The protein resides in the endoplasmic reticulum membrane. It is found in the sarcoplasmic reticulum membrane. The enzyme catalyses K(+)(in) = K(+)(out). The catalysed reaction is Ca(2+)(in) = Ca(2+)(out). Functionally, functions as a voltage-gated monoatomic cation channel permeable to both potassium and calcium. Plays a role in the cellular response to DNA damage. The polypeptide is Voltage-gated monoatomic cation channel TMEM109 (Rattus norvegicus (Rat)).